A 419-amino-acid chain; its full sequence is N-acylglucosamine 2-epimerase (419 aa).

A leucine-zipper region spans residues 185–206; that stretch reads LLNLVEQLGEEDEEMTDKYAEL. A Phosphoserine modification is found at serine 418.

Belongs to the N-acylglucosamine 2-epimerase family. In terms of assembly, homodimer. Forms a heterodimer with renin and inhibits its activity. Kidney, adrenal gland, brain, lung, spleen, ovary, testis and heart.

It catalyses the reaction an N-acyl-D-glucosamine = an N-acyl-D-mannosamine. Its pathway is amino-sugar metabolism; N-acetylneuraminate degradation. In terms of biological role, catalyzes the interconversion of N-acetylglucosamine to N-acetylmannosamine. Involved in the N-glycolylneuraminic acid (Neu5Gc) degradation pathway. The chain is N-acylglucosamine 2-epimerase (Renbp) from Rattus norvegicus (Rat).